Reading from the N-terminus, the 393-residue chain is MTQIGTPLSPTATRVLFCGSGELGKEVVIELQRLGVEVIAVDRYENAPAMQVAHRSHVINMLDGAALRAVIEAEKPDFIVPEIEAIATATLVELEAEGFTVIPTARAAQLTMNREGIRRLAAEELKLPTSPYHFADTFEAYSKAVEDLGFPCVVKPVMSSSGKGQSLLKSADDVQKAWDYAQEGGRAGKGRVIVEGFIDFDYEITLLTVRHIGGTTFCAPVGHRQEKGDYQESWQPQAMSPVALAESERVARAVTEALGGRGMFGVELFIKGDQVWFSEVSPRPHDTGLVTLISQDLSQFALHARAILGLPIPLIRQFGPSASAVILVEGQSTQTAFANLGAALAEPDTALRLFGKPEVNGQRRMGVALARDESIEAARAKATRASQAVDVKL.

N(1)-(5-phospho-beta-D-ribosyl)glycinamide is bound by residues 22–23 and E82; that span reads EL. ATP-binding positions include R114, K155, 160 to 165, 195 to 198, and E203; these read SSGKGQ and EGFI. In terms of domain architecture, ATP-grasp spans 119–308; sequence RLAAEELKLP…QFALHARAIL (190 aa). Residues E267 and E279 each coordinate Mg(2+). Residues D286, K356, and 363-364 each bind N(1)-(5-phospho-beta-D-ribosyl)glycinamide; that span reads RR.

The protein belongs to the PurK/PurT family. As to quaternary structure, homodimer.

The enzyme catalyses N(1)-(5-phospho-beta-D-ribosyl)glycinamide + formate + ATP = N(2)-formyl-N(1)-(5-phospho-beta-D-ribosyl)glycinamide + ADP + phosphate + H(+). The protein operates within purine metabolism; IMP biosynthesis via de novo pathway; N(2)-formyl-N(1)-(5-phospho-D-ribosyl)glycinamide from N(1)-(5-phospho-D-ribosyl)glycinamide (formate route): step 1/1. Involved in the de novo purine biosynthesis. Catalyzes the transfer of formate to 5-phospho-ribosyl-glycinamide (GAR), producing 5-phospho-ribosyl-N-formylglycinamide (FGAR). Formate is provided by PurU via hydrolysis of 10-formyl-tetrahydrofolate. This is Formate-dependent phosphoribosylglycinamide formyltransferase from Pseudomonas savastanoi pv. phaseolicola (strain 1448A / Race 6) (Pseudomonas syringae pv. phaseolicola (strain 1448A / Race 6)).